The sequence spans 465 residues: ATP synthase subunit beta (465 aa).

Position 151-158 (151-158 (GGAGVGKT)) interacts with ATP.

The protein belongs to the ATPase alpha/beta chains family. F-type ATPases have 2 components, CF(1) - the catalytic core - and CF(0) - the membrane proton channel. CF(1) has five subunits: alpha(3), beta(3), gamma(1), delta(1), epsilon(1). CF(0) has four main subunits: a(1), b(1), b'(1) and c(9-12).

It localises to the cell inner membrane. It catalyses the reaction ATP + H2O + 4 H(+)(in) = ADP + phosphate + 5 H(+)(out). Functionally, produces ATP from ADP in the presence of a proton gradient across the membrane. The catalytic sites are hosted primarily by the beta subunits. In Chloroherpeton thalassium (strain ATCC 35110 / GB-78), this protein is ATP synthase subunit beta.